Here is a 556-residue protein sequence, read N- to C-terminus: Zinc finger protein 18 (556 aa).

One can recognise an SCAN box domain in the interval 41 to 123 (RQLFRQFRYQ…TLVESLKGEP (83 aa)). Positions 169–195 (QDLPLQNSSSATGELLSHGVKEESDME) are disordered. The 74-residue stretch at 218-291 (ELGTAVLPPL…HLHGAEKMAR (74 aa)) folds into the KRAB domain. C2H2-type zinc fingers lie at residues 415-437 (PTCR…QRTH), 443-465 (FHCH…QRTH), 471-493 (CKCD…EKIH), 499-521 (YKCP…QRVH), and 527-549 (YKCT…QRSH).

This sequence belongs to the krueppel C2H2-type zinc-finger protein family.

The protein resides in the nucleus. Its function is as follows. May be involved in transcriptional regulation. In Mus musculus (Mouse), this protein is Zinc finger protein 18 (Znf18).